The following is a 159-amino-acid chain: Transcription elongation factor GreA (159 aa).

This sequence belongs to the GreA/GreB family.

Its function is as follows. Necessary for efficient RNA polymerase transcription elongation past template-encoded arresting sites. The arresting sites in DNA have the property of trapping a certain fraction of elongating RNA polymerases that pass through, resulting in locked ternary complexes. Cleavage of the nascent transcript by cleavage factors such as GreA or GreB allows the resumption of elongation from the new 3'terminus. GreA releases sequences of 2 to 3 nucleotides. This chain is Transcription elongation factor GreA, found in Psychromonas ingrahamii (strain DSM 17664 / CCUG 51855 / 37).